The following is a 216-amino-acid chain: Ribosomal RNA small subunit methyltransferase G (216 aa).

S-adenosyl-L-methionine is bound by residues Gly86, Leu91, 137-138, and Arg155; that span reads VE.

It belongs to the methyltransferase superfamily. RNA methyltransferase RsmG family.

It localises to the cytoplasm. It catalyses the reaction guanosine(527) in 16S rRNA + S-adenosyl-L-methionine = N(7)-methylguanosine(527) in 16S rRNA + S-adenosyl-L-homocysteine. Its function is as follows. Specifically methylates the N7 position of guanine in position 527 of 16S rRNA. This chain is Ribosomal RNA small subunit methyltransferase G, found in Lawsonia intracellularis (strain PHE/MN1-00).